The primary structure comprises 508 residues: Protoporphyrinogen oxidase 2, chloroplastic/mitochondrial (508 aa).

The transit peptide at 1 to 22 (MASGAVADHQIEAVSGKRVAVV) directs the protein to the chloroplast and mitochondrion. Residues 23 to 28 (GAGVSG), 46 to 47 (EA), and 68 to 71 (GANT) contribute to the FAD site. The interval 219–239 (KGGKSRDTKSSPGTKKGSRGS) is disordered. FAD contacts are provided by residues Val-268 and 475–477 (LSV).

It belongs to the protoporphyrinogen/coproporphyrinogen oxidase family. Protoporphyrinogen oxidase subfamily. Requires FAD as cofactor.

The protein localises to the plastid. Its subcellular location is the chloroplast. It is found in the mitochondrion. The catalysed reaction is protoporphyrinogen IX + 3 O2 = protoporphyrin IX + 3 H2O2. The protein operates within porphyrin-containing compound metabolism; protoporphyrin-IX biosynthesis; protoporphyrin-IX from protoporphyrinogen-IX: step 1/1. Its pathway is porphyrin-containing compound metabolism; chlorophyll biosynthesis. Its function is as follows. Catalyzes the 6-electron oxidation of protoporphyrinogen-IX to form protoporphyrin-IX. This Arabidopsis thaliana (Mouse-ear cress) protein is Protoporphyrinogen oxidase 2, chloroplastic/mitochondrial (PPOX2).